The primary structure comprises 232 residues: Flagellar L-ring protein (232 aa).

The signal sequence occupies residues 1 to 21; it reads MQKYALHAYPVMALMVATLTG. C22 is lipidated: N-palmitoyl cysteine. Residue C22 is the site of S-diacylglycerol cysteine attachment.

This sequence belongs to the FlgH family. In terms of assembly, the basal body constitutes a major portion of the flagellar organelle and consists of four rings (L,P,S, and M) mounted on a central rod.

It is found in the cell outer membrane. It localises to the bacterial flagellum basal body. In terms of biological role, assembles around the rod to form the L-ring and probably protects the motor/basal body from shearing forces during rotation. The protein is Flagellar L-ring protein of Salmonella choleraesuis (strain SC-B67).